The following is a 423-amino-acid chain: Glutamyl-tRNA reductase (423 aa).

Substrate contacts are provided by residues 49–52 (TCNR), Ser111, 116–118 (EPQ), and Gln122. The active-site Nucleophile is the Cys50. Residue 191–196 (GAGEMS) coordinates NADP(+).

Belongs to the glutamyl-tRNA reductase family. In terms of assembly, homodimer.

The enzyme catalyses (S)-4-amino-5-oxopentanoate + tRNA(Glu) + NADP(+) = L-glutamyl-tRNA(Glu) + NADPH + H(+). It functions in the pathway porphyrin-containing compound metabolism; protoporphyrin-IX biosynthesis; 5-aminolevulinate from L-glutamyl-tRNA(Glu): step 1/2. In terms of biological role, catalyzes the NADPH-dependent reduction of glutamyl-tRNA(Glu) to glutamate 1-semialdehyde (GSA). The polypeptide is Glutamyl-tRNA reductase (Syntrophus aciditrophicus (strain SB)).